A 248-amino-acid polypeptide reads, in one-letter code: Superoxide dismutase [Mn] 1 (248 aa).

A signal peptide spans 1-41 (MQTTFRRILILFVGLLVPLFFACQSNSQVDAAPSAAPQLSA). Mn(2+) is bound by residues histidine 68, histidine 123, aspartate 208, and histidine 212.

It belongs to the iron/manganese superoxide dismutase family. In terms of assembly, homodimer. It depends on Mn(2+) as a cofactor.

It carries out the reaction 2 superoxide + 2 H(+) = H2O2 + O2. Functionally, destroys superoxide anion radicals which are normally produced within the cells and which are toxic to biological systems. This is Superoxide dismutase [Mn] 1 (sodA1) from Leptolyngbya boryana (Plectonema boryanum).